Here is a 213-residue protein sequence, read N- to C-terminus: High frequency lysogenization protein HflD homolog (213 aa).

Positions 79-122 (QGLNAELTRYTLSLMVLERKLSSAKGALNTLGDRINGLQRQLDH) form a coiled coil.

It belongs to the HflD family.

Its subcellular location is the cytoplasm. The protein localises to the cell inner membrane. The chain is High frequency lysogenization protein HflD homolog from Salmonella agona (strain SL483).